The following is a 225-amino-acid chain: UPF0758 protein BAV2405 (225 aa).

The MPN domain maps to 103 to 225; it reads AMKHPEEVRR…ALSMAERGLI (123 aa). Residues H174, H176, and D187 each coordinate Zn(2+). The JAMM motif signature appears at 174-187; sequence HNHPSGNPQPSAAD.

The protein belongs to the UPF0758 family.

The protein is UPF0758 protein BAV2405 of Bordetella avium (strain 197N).